The primary structure comprises 309 residues: Ribonuclease H2 subunit B (309 aa).

An N-acetylalanine modification is found at Ala-2. Lys-295 is modified (N6-acetyllysine). Ser-296 bears the Phosphoserine mark.

It belongs to the RNase H2 subunit B family. The RNase H2 complex is a heterotrimer composed of the catalytic subunit RNASEH2A and the non-catalytic subunits RNASEH2B and RNASEH2C.

Its subcellular location is the nucleus. In terms of biological role, non catalytic subunit of RNase H2, an endonuclease that specifically degrades the RNA of RNA:DNA hybrids. Participates in DNA replication, possibly by mediating the removal of lagging-strand Okazaki fragment RNA primers during DNA replication. Mediates the excision of single ribonucleotides from DNA:RNA duplexes. This chain is Ribonuclease H2 subunit B (RNASEH2B), found in Bos taurus (Bovine).